We begin with the raw amino-acid sequence, 313 residues long: Elongation factor Ts (313 aa).

Positions 82–85 (TDFV) are involved in Mg(2+) ion dislocation from EF-Tu.

This sequence belongs to the EF-Ts family.

It is found in the cytoplasm. Functionally, associates with the EF-Tu.GDP complex and induces the exchange of GDP to GTP. It remains bound to the aminoacyl-tRNA.EF-Tu.GTP complex up to the GTP hydrolysis stage on the ribosome. This Nostoc sp. (strain PCC 7120 / SAG 25.82 / UTEX 2576) protein is Elongation factor Ts.